A 210-amino-acid polypeptide reads, in one-letter code: Chaperone protein TorD (210 aa).

This sequence belongs to the TorD/DmsD family. TorD subfamily.

The protein resides in the cytoplasm. Its function is as follows. Involved in the biogenesis of TorA. Acts on TorA before the insertion of the molybdenum cofactor and, as a result, probably favors a conformation of the apoenzyme that is competent for acquiring the cofactor. This Salmonella dublin (strain CT_02021853) protein is Chaperone protein TorD.